The following is a 170-amino-acid chain: VGGRGRGRGTAAAARREPGGAMAAGSITTLPALPEGGDGGAFAPGHFKDPNGGFFLRIHPDGRVDGVREKTDPHIKLQLQAEDRGVVSIKGVCANRYLAMKEDGRLLASKCVTDECFFFERLESNNYNTYRSRKYSSWYVALKRTGQYKLGSKTGPGQKAILFLPMSAKS.

The disordered stretch occupies residues 1–21 (VGGRGRGRGTAAAARREPGGA). Omega-N-methylarginine; alternate occurs at positions 4, 6, and 8. Residues R4, R6, and R8 each carry the symmetric dimethylarginine; alternate modification. Positions 9-21 (GTAAAARREPGGA) are enriched in low complexity. Residue N51 participates in heparin binding. Position 97 is a phosphotyrosine; by TEC (Y97). A Glycyl lysine isopeptide (Lys-Gly) (interchain with G-Cter in SUMO1) cross-link involves residue K110. Residues 143 to 159 (KRTGQYKLGSKTGPGQK) are heparin-binding.

Belongs to the heparin-binding growth factors family. As to quaternary structure, monomer. Homodimer. Interacts with FGFR1, FGFR2, FGFR3 and FGFR4. Affinity between fibroblast growth factors (FGFs) and their receptors is increased by heparan sulfate glycosaminoglycans that function as coreceptors. Interacts with CSPG4, FGFBP1 and TEC. Found in a complex with FGFBP1, FGF1 and FGF2. Interacts with FGFBP3. Interacts with integrin ITGAV:ITGB3; the interaction is required for FGF2 signaling. Interacts with SNORC (via the extracellular domain). Interacts with glypican GPC3. The N-terminus of isoform 2 is blocked. Post-translationally, phosphorylation at Tyr-97 regulates FGF2 unconventional secretion.

It localises to the secreted. It is found in the nucleus. Functionally, acts as a ligand for FGFR1, FGFR2, FGFR3 and FGFR4. Also acts as an integrin ligand which is required for FGF2 signaling. Binds to integrin ITGAV:ITGB3. Plays an important role in the regulation of cell survival, cell division, cell differentiation and cell migration. Functions as a potent mitogen in vitro. Can induce angiogenesis. Mediates phosphorylation of ERK1/2 and thereby promotes retinal lens fiber differentiation. The polypeptide is Fibroblast growth factor 2 (FGF2) (Cavia porcellus (Guinea pig)).